The sequence spans 462 residues: Argininosuccinate lyase (462 aa).

The protein belongs to the lyase 1 family. Argininosuccinate lyase subfamily.

It localises to the cytoplasm. It catalyses the reaction 2-(N(omega)-L-arginino)succinate = fumarate + L-arginine. Its pathway is amino-acid biosynthesis; L-arginine biosynthesis; L-arginine from L-ornithine and carbamoyl phosphate: step 3/3. This Bacillus cereus (strain AH820) protein is Argininosuccinate lyase.